The chain runs to 823 residues: Adhesion G protein-coupled receptor E2 (823 aa).

A signal peptide spans 1-23 (MGGRVFLVFLAFCVWLTLPGAET). The Extracellular segment spans residues 24–540 (QDSRGCARWC…EEDPVLTVIT (517 aa)). The EGF-like 1 domain occupies 25-66 (DSRGCARWCPQDSSCVNATACRCNPGFSSFSEIITTPMETCD). Disulfide bonds link Cys-29-Cys-39, Cys-33-Cys-45, Cys-47-Cys-65, Cys-71-Cys-85, Cys-79-Cys-94, Cys-96-Cys-117, Cys-123-Cys-136, Cys-130-Cys-145, Cys-147-Cys-161, Cys-167-Cys-180, Cys-174-Cys-189, Cys-191-Cys-210, Cys-216-Cys-229, Cys-223-Cys-238, and Cys-240-Cys-259. N-linked (GlcNAc...) asparagine glycosylation is present at Asn-41. The EGF-like 2; calcium-binding domain occupies 67–118 (DINECATLSKVSCGKFSDCWNTEGSYDCVCSPGYEPVSGAKTFKNESENTCQ). A glycan (N-linked (GlcNAc...) asparagine) is linked at Asn-111. In terms of domain architecture, EGF-like 3; calcium-binding spans 119–162 (DVDECQQNPRLCKSYGTCVNTLGSYTCQCLPGFKLKPEDPKLCT). In terms of domain architecture, EGF-like 4; calcium-binding spans 163–211 (DVNECTSGQNPCHSSTHCLNNVGSYQCRCRPGWQPIPGSPNGPNNTVCE). Asn-206 carries N-linked (GlcNAc...) asparagine glycosylation. In terms of domain architecture, EGF-like 5; calcium-binding spans 212–260 (DVDECSSGQHQCDSSTVCFNTVGSYSCRCRPGWKPRHGIPNNQKDTVCE). N-linked (GlcNAc...) asparagine glycans are attached at residues Asn-298, Asn-347, Asn-354, Asn-456, and Asn-460. The region spanning 354 to 530 (NFSYPAGTEL…AVLMAHYDVQ (177 aa)) is the GAIN-B domain. 2 disulfide bridges follow: Cys-482–Cys-512 and Cys-500–Cys-514. The GPS stretch occupies residues 482–530 (CVFWEHGQNGCGHWATTGCSTIGTRDTSTICRCTHLSSFAVLMAHYDVQ). Residues 541-561 (YMGLSVSLLCLLLAALTFLLC) form a helical membrane-spanning segment. Topologically, residues 562 to 569 (KAIQNTST) are cytoplasmic. A helical membrane pass occupies residues 570–590 (SLHLQLSLCLFLAHLLFLVAI). The Extracellular segment spans residues 591–605 (DQTGHKVLCSIIAGT). A helical membrane pass occupies residues 606–626 (LHYLYLATLTWMLLEALYLFL). Topologically, residues 627–644 (TARNLTVVNYSSINRFMK) are cytoplasmic. The chain crosses the membrane as a helical span at residues 645–665 (KLMFPVGYGVPAVTVAISAAS). The Extracellular segment spans residues 666-683 (RPHLYGTPSRCWLQPEKG). The chain crosses the membrane as a helical span at residues 684-704 (FIWGFLGPVCAIFSVNLVLFL). Residues 705–735 (VTLWILKNRLSSLNSEVSTLRNTRMLAFKAT) lie on the Cytoplasmic side of the membrane. The helical transmembrane segment at 736–756 (AQLFILGCTWCLGILQVGPAA) threads the bilayer. The Extracellular portion of the chain corresponds to 757–760 (RVMA). A helical transmembrane segment spans residues 761–781 (YLFTIINSLQGVFIFLVYCLL). Residues 782–823 (SQQVREQYGKWSKGIRKLKTESEMHTLSSSAKADTSKPSTVN) are Cytoplasmic-facing.

This sequence belongs to the G-protein coupled receptor 2 family. Adhesion G-protein coupled receptor (ADGR) subfamily. In terms of assembly, forms a heterodimer, consisting of a large extracellular region non-covalently linked to a seven-transmembrane moiety. Interacts with chondroitin sulfate; the interaction with chondroitin sulfate is calcium-dependent. Interacts with CD55. Autoproteolytically cleaved into 2 subunits, an extracellular alpha subunit and a seven-transmembrane beta subunit. In terms of tissue distribution, expression is restricted to myeloid cells. Highest expression was found in peripheral blood leukocytes, followed by spleen and lymph nodes, with intermediate to low levels in thymus, bone marrow, fetal liver, placenta, and lung, and no expression in heart, brain, skeletal muscle, kidney, or pancreas. Expression is also detected in monocyte/macrophage and Jurkat cell lines but not in other cell lines tested. High expression in mast cells.

The protein resides in the cell membrane. It localises to the cell projection. It is found in the ruffle membrane. Functionally, cell surface receptor that binds to the chondroitin sulfate moiety of glycosaminoglycan chains and promotes cell attachment. Promotes granulocyte chemotaxis, degranulation and adhesion. In macrophages, promotes the release of inflammatory cytokines, including IL8 and TNF. Signals probably through G-proteins. Is a regulator of mast cell degranulation. The sequence is that of Adhesion G protein-coupled receptor E2 from Homo sapiens (Human).